The primary structure comprises 51 residues: Large ribosomal subunit protein eL39 (51 aa).

This sequence belongs to the eukaryotic ribosomal protein eL39 family. As to quaternary structure, interacts with impact.

This is Large ribosomal subunit protein eL39 (rpl39) from Ictalurus punctatus (Channel catfish).